Reading from the N-terminus, the 197-residue chain is Shikimate kinase (197 aa).

15–20 contributes to the ATP binding site; that stretch reads GSGKSS. Mg(2+) is bound at residue Ser-19. Substrate-binding residues include Asp-37, Arg-61, and Gly-83. Arg-121 provides a ligand contact to ATP. Residue Arg-148 participates in substrate binding.

This sequence belongs to the shikimate kinase family. In terms of assembly, monomer. Mg(2+) is required as a cofactor.

The protein localises to the cytoplasm. It carries out the reaction shikimate + ATP = 3-phosphoshikimate + ADP + H(+). Its pathway is metabolic intermediate biosynthesis; chorismate biosynthesis; chorismate from D-erythrose 4-phosphate and phosphoenolpyruvate: step 5/7. Catalyzes the specific phosphorylation of the 3-hydroxyl group of shikimic acid using ATP as a cosubstrate. This is Shikimate kinase from Chlorobium phaeovibrioides (strain DSM 265 / 1930) (Prosthecochloris vibrioformis (strain DSM 265)).